The primary structure comprises 143 residues: UPF0102 protein Acid345_3985 (143 aa).

The protein belongs to the UPF0102 family.

This chain is UPF0102 protein Acid345_3985, found in Koribacter versatilis (strain Ellin345).